We begin with the raw amino-acid sequence, 345 residues long: uncharacterized protein (345 aa).

2 consecutive transmembrane segments (helical) span residues 23–43 and 56–76; these read VVGF…YSYV and FLIA…FVAL. The tract at residues 326–345 is disordered; it reads VTEPTTNSKRKPVKAKKAKK. A compositionally biased stretch (basic residues) spans 333–345; the sequence is SKRKPVKAKKAKK.

The protein resides in the cell membrane. This is an uncharacterized protein from Mycoplasma pneumoniae (strain ATCC 29342 / M129 / Subtype 1) (Mycoplasmoides pneumoniae).